Consider the following 424-residue polypeptide: Glutamyl-tRNA reductase (424 aa).

Substrate-binding positions include 49-52, serine 105, 110-112, and glutamine 116; these read TCNR and EPQ. The active-site Nucleophile is the cysteine 50. 185 to 190 provides a ligand contact to NADP(+); that stretch reads GSGETA.

Belongs to the glutamyl-tRNA reductase family. Homodimer.

It catalyses the reaction (S)-4-amino-5-oxopentanoate + tRNA(Glu) + NADP(+) = L-glutamyl-tRNA(Glu) + NADPH + H(+). It participates in porphyrin-containing compound metabolism; protoporphyrin-IX biosynthesis; 5-aminolevulinate from L-glutamyl-tRNA(Glu): step 1/2. Its function is as follows. Catalyzes the NADPH-dependent reduction of glutamyl-tRNA(Glu) to glutamate 1-semialdehyde (GSA). This is Glutamyl-tRNA reductase from Legionella pneumophila (strain Lens).